Here is a 449-residue protein sequence, read N- to C-terminus: Glucose-6-phosphate isomerase (449 aa).

The Proton donor role is filled by E291. Catalysis depends on residues H312 and K426.

The protein belongs to the GPI family.

The protein resides in the cytoplasm. The enzyme catalyses alpha-D-glucose 6-phosphate = beta-D-fructose 6-phosphate. Its pathway is carbohydrate biosynthesis; gluconeogenesis. It functions in the pathway carbohydrate degradation; glycolysis; D-glyceraldehyde 3-phosphate and glycerone phosphate from D-glucose: step 2/4. Catalyzes the reversible isomerization of glucose-6-phosphate to fructose-6-phosphate. The sequence is that of Glucose-6-phosphate isomerase from Pediococcus pentosaceus (strain ATCC 25745 / CCUG 21536 / LMG 10740 / 183-1w).